Reading from the N-terminus, the 367-residue chain is Alginate lyase (367 aa).

The first 27 residues, 1–27 (MKTSHLIRITLPGALAAALLASQVSQA), serve as a signal peptide directing secretion. Residues 65–66 (SK), 138–139 (HT), and tyrosine 256 contribute to the substrate site.

The protein belongs to the polysaccharide lyase 5 family.

It is found in the periplasm. The catalysed reaction is Eliminative cleavage of alginate to give oligosaccharides with 4-deoxy-alpha-L-erythro-hex-4-enuronosyl groups at their non-reducing ends and beta-D-mannuronate at their reducing end.. Functionally, catalyzes the depolymerization of alginate by cleaving the beta-1,4 glycosidic bond between two adjacent sugar residues via a beta-elimination mechanism. May serve to degrade mislocalized alginate that is trapped in the periplasmic space. In Pseudomonas paraeruginosa (strain DSM 24068 / PA7) (Pseudomonas aeruginosa (strain PA7)), this protein is Alginate lyase.